The primary structure comprises 458 residues: Adenylosuccinate synthetase (458 aa).

GTP is bound by residues 17 to 23 (GDEGKGK) and 45 to 47 (GHT). D18 (proton acceptor) is an active-site residue. Residues D18 and G45 each contribute to the Mg(2+) site. Residues 18 to 21 (DEGK), 43 to 46 (NAGH), T137, R151, Q247, T262, and R330 each bind IMP. H46 (proton donor) is an active-site residue. 326–332 (VTTGRSR) is a binding site for substrate. Residues R332, 358–360 (KLD), and 440–442 (STS) contribute to the GTP site.

The protein belongs to the adenylosuccinate synthetase family. In terms of assembly, homodimer. The cofactor is Mg(2+).

The protein resides in the cytoplasm. It carries out the reaction IMP + L-aspartate + GTP = N(6)-(1,2-dicarboxyethyl)-AMP + GDP + phosphate + 2 H(+). The protein operates within purine metabolism; AMP biosynthesis via de novo pathway; AMP from IMP: step 1/2. Functionally, plays an important role in the de novo pathway of purine nucleotide biosynthesis. Catalyzes the first committed step in the biosynthesis of AMP from IMP. The protein is Adenylosuccinate synthetase of Acidovorax ebreus (strain TPSY) (Diaphorobacter sp. (strain TPSY)).